A 340-amino-acid chain; its full sequence is Fructose-1,6-bisphosphatase class 1 (340 aa).

Glu107, Asp126, Leu128, and Asp129 together coordinate Mg(2+). Asn215 provides a ligand contact to substrate. Residue Glu287 coordinates Mg(2+).

It belongs to the FBPase class 1 family. Homotetramer. The cofactor is Mg(2+).

Its subcellular location is the cytoplasm. It carries out the reaction beta-D-fructose 1,6-bisphosphate + H2O = beta-D-fructose 6-phosphate + phosphate. It functions in the pathway carbohydrate biosynthesis; gluconeogenesis. This is Fructose-1,6-bisphosphatase class 1 from Brucella canis (strain ATCC 23365 / NCTC 10854 / RM-666).